Reading from the N-terminus, the 69-residue chain is Large ribosomal subunit protein uL29 (69 aa).

The protein belongs to the universal ribosomal protein uL29 family.

In Lactococcus lactis subsp. lactis (strain IL1403) (Streptococcus lactis), this protein is Large ribosomal subunit protein uL29 (rpmC).